Consider the following 947-residue polypeptide: ATP-dependent RNA helicase DDX42 (947 aa).

The segment covering Met-1 to Gly-18 has biased composition (gly residues). Disordered stretches follow at residues Met-1 to Pro-54, Glu-68 to Ala-114, and Asn-176 to Ile-200. Polar residues predominate over residues Val-34 to Pro-54. Acidic residues predominate over residues Glu-68–Ser-81. Residues Leu-112 to Asp-152 are a coiled coil. The Q motif motif lies at Ser-250 to Cys-278. The Helicase ATP-binding domain occupies Ile-281 to Val-456. Position 294-301 (Ala-294–Thr-301) interacts with ATP. The DEAD box signature appears at Asp-404–Asp-407. The region spanning Trp-484–Ala-629 is the Helicase C-terminal domain. Disordered stretches follow at residues Ser-731–Pro-754 and Gly-797–Ser-947. The span at Gly-805–Thr-929 shows a compositional bias: basic and acidic residues. Over residues Pro-938–Ser-947 the composition is skewed to basic residues.

It belongs to the DEAD box helicase family. DDX42 subfamily. In terms of assembly, transient component of the SF3B subcomplex of the 17S U2 SnRNP complex.

It localises to the cytoplasm. It is found in the nucleus. The enzyme catalyses ATP + H2O = ADP + phosphate + H(+). In terms of biological role, ATP-dependent RNA helicase that binds to partially double-stranded RNAs (dsRNAs) in order to unwind RNA secondary structures. Unwinding is promoted in the presence of single-strand binding proteins. Also mediates RNA duplex formation thereby displacing the single-strand RNA binding protein. ATP and ADP modulate its activity: ATP binding and hydrolysis by DDX42 triggers RNA strand separation, whereas the ADP-bound form of the protein triggers annealing of complementary RNA strands. Required for assembly of the 17S U2 SnRNP complex of the spliceosome, a large ribonucleoprotein complex that removes introns from transcribed pre-mRNAs: DDX42 associates transiently with the SF3B subcomplex of the 17S U2 SnRNP complex and is released after fulfilling its role in the assembly of 17S U2 SnRNP. The chain is ATP-dependent RNA helicase DDX42 (ddx42) from Xenopus laevis (African clawed frog).